Reading from the N-terminus, the 410-residue chain is Argininosuccinate synthase (410 aa).

Residues 14-22 and alanine 41 contribute to the ATP site; that span reads AYSGGLDTS. L-citrulline is bound by residues tyrosine 92 and serine 97. Glycine 122 serves as a coordination point for ATP. Threonine 124, asparagine 128, and aspartate 129 together coordinate L-aspartate. Residue asparagine 128 participates in L-citrulline binding. Residues arginine 132, serine 183, serine 192, glutamate 268, and tyrosine 280 each coordinate L-citrulline.

The protein belongs to the argininosuccinate synthase family. Type 1 subfamily. Homotetramer.

It is found in the cytoplasm. The catalysed reaction is L-citrulline + L-aspartate + ATP = 2-(N(omega)-L-arginino)succinate + AMP + diphosphate + H(+). It functions in the pathway amino-acid biosynthesis; L-arginine biosynthesis; L-arginine from L-ornithine and carbamoyl phosphate: step 2/3. This chain is Argininosuccinate synthase, found in Parvibaculum lavamentivorans (strain DS-1 / DSM 13023 / NCIMB 13966).